We begin with the raw amino-acid sequence, 404 residues long: Cysteine desulfurase IscS (404 aa).

Pyridoxal 5'-phosphate-binding positions include alanine 75–threonine 76, asparagine 155, glutamine 183, and serine 203–histidine 205. Lysine 206 is subject to N6-(pyridoxal phosphate)lysine. Threonine 243 serves as a coordination point for pyridoxal 5'-phosphate. Cysteine 328 serves as the catalytic Cysteine persulfide intermediate. Cysteine 328 is a binding site for [2Fe-2S] cluster.

This sequence belongs to the class-V pyridoxal-phosphate-dependent aminotransferase family. NifS/IscS subfamily. Homodimer. Forms a heterotetramer with IscU, interacts with other sulfur acceptors. Pyridoxal 5'-phosphate serves as cofactor.

The protein localises to the cytoplasm. It carries out the reaction (sulfur carrier)-H + L-cysteine = (sulfur carrier)-SH + L-alanine. It participates in cofactor biosynthesis; iron-sulfur cluster biosynthesis. Functionally, master enzyme that delivers sulfur to a number of partners involved in Fe-S cluster assembly, tRNA modification or cofactor biosynthesis. Catalyzes the removal of elemental sulfur atoms from cysteine to produce alanine. Functions as a sulfur delivery protein for Fe-S cluster synthesis onto IscU, an Fe-S scaffold assembly protein, as well as other S acceptor proteins. In Neisseria meningitidis serogroup C / serotype 2a (strain ATCC 700532 / DSM 15464 / FAM18), this protein is Cysteine desulfurase IscS.